Consider the following 157-residue polypeptide: XylDLEGF operon transcriptional activator 2 (157 aa).

The 102-residue stretch at 39–140 (ERVVQFIEEN…GELPSDTLSL (102 aa)) folds into the HTH araC/xylS-type domain. 2 consecutive DNA-binding regions (H-T-H motif) follow at residues 56–77 (EQLA…EKHT) and 107–130 (ITEV…RSTF).

It localises to the cytoplasm. Functionally, regulatory protein of the TOL plasmid xyl operons. XylS activates the xylXYZLTEGFJQKIH operon required for the degradation of toluene, m-xylene and p-xylene. In Pseudomonas putida (Arthrobacter siderocapsulatus), this protein is XylDLEGF operon transcriptional activator 2 (xylS2).